Reading from the N-terminus, the 145-residue chain is uncharacterized protein (145 aa).

The CBM3 domain maps to Leu-1 to Pro-145.

This is an uncharacterized protein from Paenibacillus lautus (Bacillus lautus).